The sequence spans 297 residues: Probable endonuclease 4 (297 aa).

Residues His-69, His-110, Glu-145, Asp-179, His-182, His-214, Asp-227, His-229, and Glu-259 each coordinate Zn(2+).

Belongs to the AP endonuclease 2 family. It depends on Zn(2+) as a cofactor.

The enzyme catalyses Endonucleolytic cleavage to 5'-phosphooligonucleotide end-products.. Functionally, endonuclease IV plays a role in DNA repair. It cleaves phosphodiester bonds at apurinic or apyrimidinic (AP) sites, generating a 3'-hydroxyl group and a 5'-terminal sugar phosphate. The sequence is that of Probable endonuclease 4 from Listeria welshimeri serovar 6b (strain ATCC 35897 / DSM 20650 / CCUG 15529 / CIP 8149 / NCTC 11857 / SLCC 5334 / V8).